Consider the following 243-residue polypeptide: Peptidyl-tRNA hydrolase (243 aa).

Residue Tyr-14 coordinates tRNA. Residue His-19 is the Proton acceptor of the active site. Phe-64, Asn-66, and Asn-112 together coordinate tRNA. Residues 188–243 (GGKAEEEKPRKDNKTTEKKPAGQSHIHQARNHNQPKVLTTGPMADILKKMFGNKGE) form a disordered region. Basic and acidic residues predominate over residues 190 to 207 (KAEEEKPRKDNKTTEKKP).

This sequence belongs to the PTH family. In terms of assembly, monomer.

Its subcellular location is the cytoplasm. The catalysed reaction is an N-acyl-L-alpha-aminoacyl-tRNA + H2O = an N-acyl-L-amino acid + a tRNA + H(+). Its function is as follows. Hydrolyzes ribosome-free peptidyl-tRNAs (with 1 or more amino acids incorporated), which drop off the ribosome during protein synthesis, or as a result of ribosome stalling. Functionally, catalyzes the release of premature peptidyl moieties from peptidyl-tRNA molecules trapped in stalled 50S ribosomal subunits, and thus maintains levels of free tRNAs and 50S ribosomes. The sequence is that of Peptidyl-tRNA hydrolase from Rhizobium leguminosarum bv. trifolii (strain WSM2304).